A 475-amino-acid polypeptide reads, in one-letter code: Ribulose bisphosphate carboxylase large chain (475 aa).

Positions methionine 1–valine 2 are excised as a propeptide. An N-acetylproline modification is found at proline 3. Position 14 is an N6,N6,N6-trimethyllysine (lysine 14). The substrate site is built by asparagine 123 and threonine 173. Lysine 175 serves as the catalytic Proton acceptor. A substrate-binding site is contributed by lysine 177. Residues lysine 201, aspartate 203, and glutamate 204 each coordinate Mg(2+). Lysine 201 carries the N6-carboxylysine modification. Residue histidine 294 is the Proton acceptor of the active site. Substrate-binding residues include arginine 295, histidine 327, and serine 379.

The protein belongs to the RuBisCO large chain family. Type I subfamily. Heterohexadecamer of 8 large chains and 8 small chains. Mg(2+) is required as a cofactor.

The protein resides in the plastid. It localises to the chloroplast. The enzyme catalyses 2 (2R)-3-phosphoglycerate + 2 H(+) = D-ribulose 1,5-bisphosphate + CO2 + H2O. The catalysed reaction is D-ribulose 1,5-bisphosphate + O2 = 2-phosphoglycolate + (2R)-3-phosphoglycerate + 2 H(+). RuBisCO catalyzes two reactions: the carboxylation of D-ribulose 1,5-bisphosphate, the primary event in carbon dioxide fixation, as well as the oxidative fragmentation of the pentose substrate in the photorespiration process. Both reactions occur simultaneously and in competition at the same active site. The chain is Ribulose bisphosphate carboxylase large chain from Dunaliella tertiolecta (Green alga).